We begin with the raw amino-acid sequence, 203 residues long: ATP-dependent Clp protease proteolytic subunit (203 aa).

Ser100 serves as the catalytic Nucleophile. His125 is an active-site residue.

The protein belongs to the peptidase S14 family. As to quaternary structure, fourteen ClpP subunits assemble into 2 heptameric rings which stack back to back to give a disk-like structure with a central cavity, resembling the structure of eukaryotic proteasomes.

It is found in the cytoplasm. It carries out the reaction Hydrolysis of proteins to small peptides in the presence of ATP and magnesium. alpha-casein is the usual test substrate. In the absence of ATP, only oligopeptides shorter than five residues are hydrolyzed (such as succinyl-Leu-Tyr-|-NHMec, and Leu-Tyr-Leu-|-Tyr-Trp, in which cleavage of the -Tyr-|-Leu- and -Tyr-|-Trp bonds also occurs).. Functionally, cleaves peptides in various proteins in a process that requires ATP hydrolysis. Has a chymotrypsin-like activity. Plays a major role in the degradation of misfolded proteins. This Anaeromyxobacter dehalogenans (strain 2CP-1 / ATCC BAA-258) protein is ATP-dependent Clp protease proteolytic subunit.